The primary structure comprises 551 residues: Adenylyl cyclase-associated protein (551 aa).

The segment at 34 to 55 (SGHKPLPNMHRPSRDSNSQTHN) is disordered. Serine 92 is subject to Phosphoserine. Threonine 96 bears the Phosphothreonine mark. The segment covering 288 to 300 (SASKTQAPSSGDS) has biased composition (polar residues). Disordered regions lie at residues 288-333 (SASK…NKGD) and 348-395 (TSGL…PVKP). Pro residues predominate over residues 305-315 (LPPPPPPPPPS). Over residues 352 to 361 (RKVDKSEMTH) the composition is skewed to basic and acidic residues. The C-CAP/cofactor C-like domain maps to 395-529 (PPRIELENTK…EEGDYAERAV (135 aa)).

It belongs to the CAP family.

In terms of biological role, the N-terminal domain binds to adenylyl cyclase, thereby enabling adenylyl cyclase to be activated by upstream regulatory signals, such as Ras. The C-terminal domain is required for normal cellular morphology and growth control. The polypeptide is Adenylyl cyclase-associated protein (cap1) (Schizosaccharomyces pombe (strain 972 / ATCC 24843) (Fission yeast)).